The following is a 55-amino-acid chain: Large ribosomal subunit protein bL32 (55 aa).

A disordered region spans residues 1–27 (MAVQQNKPTRSKRGMRRSHDALTTATL).

Belongs to the bacterial ribosomal protein bL32 family.

The protein is Large ribosomal subunit protein bL32 of Yersinia enterocolitica serotype O:8 / biotype 1B (strain NCTC 13174 / 8081).